A 190-amino-acid polypeptide reads, in one-letter code: Zinc metalloproteinase/disintegrin (190 aa).

The Peptidase M12B domain occupies 1–11 (NHNPECIVNEP). Residues 19 to 105 (PPVCGNELLE…ECPADVFHKN (87 aa)) form the Disintegrin domain. Ca(2+) is bound by residues valine 21, asparagine 24, leucine 26, glutamate 28, glutamate 31, and aspartate 34. Cystine bridges form between cysteine 33/cysteine 51, cysteine 35/cysteine 46, cysteine 45/cysteine 68, cysteine 59/cysteine 65, cysteine 64/cysteine 90, and cysteine 77/cysteine 97. Residues 83–85 (ECD) carry the D/ECD-tripeptide motif. 5 residues coordinate Ca(2+): aspartate 85, proline 86, glutamate 88, aspartate 100, and valine 101. Positions 104–190 (KNGQPCLDNY…DNSPGQNGPC (87 aa)) are excised as a propeptide.

The protein belongs to the venom metalloproteinase (M12B) family. P-III subfamily. In terms of assembly, monomer. Zn(2+) is required as a cofactor. As to expression, expressed by the venom gland.

Its subcellular location is the secreted. Functionally, impairs hemostasis in the envenomed animal. Inhibits platelet aggregation induced by ADP, thrombin, platelet-activating factor and collagen. Acts by inhibiting fibrinogen interaction with platelet receptors GPIIb/GPIIIa (ITGA2B/ITGB3). The protein is Zinc metalloproteinase/disintegrin of Gloydius brevicauda (Korean slamosa snake).